The sequence spans 62 residues: U8-theraphotoxin-Cg1a 2 (62 aa).

A signal peptide spans M1–A21. The propeptide occupies T22–R29. 3 disulfide bridges follow: C31–C46, C38–C51, and C45–C58.

It belongs to the neurotoxin 10 (Hwtx-1) family. 30 (Jztx-14) subfamily. Expressed by the venom gland.

It localises to the secreted. Functionally, probable ion channel inhibitor. The polypeptide is U8-theraphotoxin-Cg1a 2 (Chilobrachys guangxiensis (Chinese earth tiger tarantula)).